The chain runs to 83 residues: Beta/kappa-theraphotoxin-Cg2a (83 aa).

The N-terminal stretch at 1 to 21 (MKASVFAVILGLVVLCACSFA) is a signal peptide. Positions 22–53 (EDEQDQFVSPNELLKSMFVESRHEFTPEVEGR) are excised as a propeptide. 3 disulfides stabilise this stretch: cysteine 55/cysteine 69, cysteine 62/cysteine 74, and cysteine 68/cysteine 78. Residue isoleucine 82 is modified to Isoleucine amide.

Belongs to the neurotoxin 30 (phrixotoxin) family. In terms of tissue distribution, expressed by the venom gland.

The protein resides in the secreted. Functionally, this gating-modifier toxin shows an important inhibitory activity on sodium channels. It is very active on Nav1.7/SCN9A (IC(50)~0.6 nM), and also shows activity on Nav1.3/SCN3A (IC(50)=292 nM), Nav1.4/SCN4A (IC(50)=2.2-159 nM), and Nav1.5/SCN5A (IC(50)=2.3-2.9 uM). It has also been shown to inhibit tetrodotoxin (TTX)-resistant (IC(50)=27.6 nM) and TTX-sensitive (IC(50)=30.2 nM) sodium channels in rat dorsal root ganglion neurons. Lower inhibitory activity has also been shown on potassium channels: Kv4.2/KCND2 (IC(50)=604.2 nM), Kv4.3/KCND3 (IC(50)=425.1 nM), and Kv2.1/KCNB1 (IC(50)=14.3 uM). It binds to phospholipid membranes. Like its analog AM-8145, it may act by interacting only with the second voltage-sensor domain of Nav1.7/SCN9A. In Chilobrachys guangxiensis (Chinese earth tiger tarantula), this protein is Beta/kappa-theraphotoxin-Cg2a.